Consider the following 337-residue polypeptide: Centromere protein N (337 aa).

S226 and S233 each carry phosphoserine.

It belongs to the CENP-N/CHL4 family. As to quaternary structure, component of the CENPA-NAC complex, at least composed of CENPA, CENPC, CENPH, CENPM, CENPN, CENPT and CENPU. The CENPA-NAC complex interacts with the CENPA-CAD complex, composed of CENPI, CENPK, CENPL, CENPO, CENPP, CENPQ, CENPR and CENPS. Interacts directly with CENPA. Identified in a centromere complex containing histones H2A, H2B and H4, and at least CENPA, CENPB, CENPC, CENPT, CENPN, HJURP, SUPT16H, SSRP1 and RSF1.

It is found in the nucleus. It localises to the chromosome. The protein localises to the centromere. Its subcellular location is the kinetochore. In terms of biological role, component of the CENPA-NAC (nucleosome-associated) complex, a complex that plays a central role in assembly of kinetochore proteins, mitotic progression and chromosome segregation. The CENPA-NAC complex recruits the CENPA-CAD (nucleosome distal) complex and may be involved in incorporation of newly synthesized CENPA into centromeres. CENPN is the first protein to bind specifically to CENPA nucleosomes and the direct binding of CENPA nucleosomes by CENPN is required for centromere assembly. Required for chromosome congression and efficiently align the chromosomes on a metaphase plate. In Mus musculus (Mouse), this protein is Centromere protein N (Cenpn).